A 399-amino-acid chain; its full sequence is Centrosomal protein 43 (399 aa).

Residues 70–102 (DGRLVASLVAEFLQFFNLDFTLAVFHPETSTIQ) form the LisH domain. Disordered regions lie at residues 142–216 (PASV…SKSS) and 236–311 (DARD…KRGS). Residues serine 152 and serine 160 each carry the phosphoserine modification. The segment covering 163–172 (GKSSANSTPS) has biased composition (polar residues). Threonine 170 is modified (phosphothreonine). Over residues 175 to 186 (PRYKGQGKKKTI) the composition is skewed to basic residues. The segment covering 197-216 (SETSQSEPSVSLSESKSKSS) has biased composition (low complexity). Serine 202 bears the Phosphoserine mark. A compositionally biased stretch (acidic residues) spans 246–256 (DGDDVEGDSFF). The span at 259-275 (PIPKPEKTYGWRAEPRK) shows a compositional bias: basic and acidic residues. The span at 290-302 (RSGLSSLAGAPSL) shows a compositional bias: low complexity. 2 positions are modified to phosphoserine: serine 301 and serine 326. Residues 328-354 (GLGTGEDEDYADDFNSASHRSEKSELS) form a disordered region. Tyrosine 337 carries the post-translational modification Phosphotyrosine.

This sequence belongs to the CEP43 family. As to quaternary structure, homodimer. Part of a ternary complex that contains CEP350, CEP43 and MAPRE1. Interacts directly with CEP350 and MAPRE1. Interacts with CEP19. Interacts (via N-terminus) with CEP350 (via C-terminus).

It is found in the cytoplasm. Its subcellular location is the cytoskeleton. The protein localises to the microtubule organizing center. It localises to the centrosome. The protein resides in the centriole. It is found in the cilium basal body. Functionally, required for anchoring microtubules to the centrosomes. Required for ciliation. The polypeptide is Centrosomal protein 43 (Mus musculus (Mouse)).